The primary structure comprises 296 residues: MNKEQLEKMKNGKGFIAALDQSGGSTPKALKEYGINEDQYSNEDEMFQLVHDMRTRVVTSPSFSPDKILGAILFEQTMDREVEGKYTADYLADKGVVPFLKVDKGLAEEQNGVQLMKPIDNLDSLLDRANERHIFGTKMRSNILELNEQGIKDVVEQQFEVAKQIIAKGLVPIIEPEVNINAKDKAEIEKVLKAELKKGLDSLNADQLVMLKLTIPTEANLYKDLAEHPNVVRIVVLSGGYSREKANELLKDNAELIASFSRALASDLRAGQSKEEFDKALGDAVESIYDASVNKN.

Glu175 (proton acceptor) is an active-site residue. The active-site Schiff-base intermediate with dihydroxyacetone-P is the Lys212.

Belongs to the class I fructose-bisphosphate aldolase family.

It carries out the reaction beta-D-fructose 1,6-bisphosphate = D-glyceraldehyde 3-phosphate + dihydroxyacetone phosphate. It participates in carbohydrate degradation; glycolysis; D-glyceraldehyde 3-phosphate and glycerone phosphate from D-glucose: step 4/4. This chain is Fructose-bisphosphate aldolase class 1, found in Staphylococcus aureus (strain bovine RF122 / ET3-1).